We begin with the raw amino-acid sequence, 1117 residues long: Cytospin-A (1117 aa).

3 disordered regions span residues 1 to 176, 293 to 323, and 358 to 390; these read MKKA…NQIS, SLSPEITPGNQSDGGGTLTSSVEGSAPGSVE, and SSDDALDAPSSSESEGIPSIERSRKGSSGNASE. Low complexity-rich tracts occupy residues 45-72 and 99-119; these read TTASLSKTKSSDDLLAGMAGGVTVTNGV and KISTGTSSSTKRSTSIGNKES. 2 stretches are compositionally biased toward basic and acidic residues: residues 120 to 131 and 158 to 171; these read SSTRERLRERTR and TTTECDVRMSKSKS. Positions 168 to 280 form a coiled coil; the sequence is KSKSDNQISD…LNALGFSLEQ (113 aa). Over residues 293–303 the composition is skewed to polar residues; that stretch reads SLSPEITPGNQ. Over residues 358-377 the composition is skewed to low complexity; it reads SSDDALDAPSSSESEGIPSI. Residues Ser-384, Ser-385, and Ser-389 each carry the phosphoserine modification. Coiled-coil stretches lie at residues 394 to 449 and 487 to 807; these read ACLT…MESL and RYME…RGRV. The interval 852–878 is disordered; the sequence is SQVPNPTAAAIPRTPLSPSPMKTPPAA. Phosphoserine is present on residues Ser-868, Ser-881, and Ser-887. The interval 920 to 997 is disordered; sequence TSSTSRPASL…PTTRSRIREE (78 aa). The span at 946 to 956 shows a compositional bias: basic and acidic residues; that stretch reads RSSEEMKRDIS. Over residues 971 to 990 the composition is skewed to low complexity; sequence TTSPQLSLSSSPTASVTPTT. A Calponin-homology (CH) domain is found at 1011–1116; it reads GSKRNALLKW…YVTAIYKYFE (106 aa).

The protein belongs to the cytospin-A family. In terms of assembly, may interact with both microtubules and actin cytoskeleton.

Its subcellular location is the cytoplasm. It is found in the cytoskeleton. The protein localises to the spindle. It localises to the cell junction. The protein resides in the gap junction. Functionally, involved in cytokinesis and spindle organization. May play a role in actin cytoskeleton organization and microtubule stabilization and hence required for proper cell adhesion and migration. This Canis lupus familiaris (Dog) protein is Cytospin-A (SPECC1L).